We begin with the raw amino-acid sequence, 248 residues long: MSGDLTRCLGKGSCPPGPVPEGVIRIYSMRFCPYSHRTRLVLKAKSIRHEIININLKNKPDWYYTKHPFGQVPVLENSQCQLIYESVIACEYLDDVFPGRKLFPYDPYERARQKMLLELFCKVPQLSKECLVALRCGRDCTDLKVALRQELCNLEEILEYQNTTFFGGDSISMIDYLVWPWFERLDVYGLADCVNHTPMLRLWISSMKQDPAVCALHIDKNIFLGFLNLYFQNNPCAFDFGLCGPIVR.

The GST N-terminal domain occupies 22-101 (GVIRIYSMRF…YLDDVFPGRK (80 aa)). The active-site Nucleophile is the Cys32. Glutathione is bound by residues Lys59, Val72, and 85 to 86 (ES). The GST C-terminal domain maps to 106 to 231 (DPYERARQKM…IFLGFLNLYF (126 aa)).

This sequence belongs to the GST superfamily. Omega family.

It carries out the reaction RX + glutathione = an S-substituted glutathione + a halide anion + H(+). The enzyme catalyses L-dehydroascorbate + 2 glutathione = glutathione disulfide + L-ascorbate. The catalysed reaction is methylarsonate + 2 glutathione + H(+) = methylarsonous acid + glutathione disulfide + H2O. Exhibits glutathione-dependent thiol transferase activity. Has high dehydroascorbate reductase activity and may contribute to the recycling of ascorbic acid. Participates in the biotransformation of inorganic arsenic and reduces monomethylarsonic acid (MMA). This chain is Glutathione S-transferase omega-2 (Gsto2), found in Rattus norvegicus (Rat).